The sequence spans 273 residues: MGEKITEEREFQSISEIPEEEIDATNDEEKLADIVENEIEKEIRKSKTRKCKTIENFYYYILRDGKIYPASDYDIEVEKGKRSANDIYAFVETDVTRDFDEFLFDIDYGLPSISDILKFYLEKAGFRIANEVPTPNLKYYIHAVVEFGEDRPQYLAVNIYDIDSLARALRIPQIVEQKLGNKPRTITADEFNDIERIVAEEQPILAGYTYDEALRIPYHYYVDHNNSFKDDALKIAHAYLQLFPTPYQVCYEWKARWFNKIDCLKLERLKPSS.

The protein localises to the virion. This Acidianus convivator (ATV) protein is Structural protein ORF273.